A 505-amino-acid chain; its full sequence is Transcription factor VHR2 (505 aa).

Residues 1-16 (MIDDTENSKIHLEGSH) are compositionally biased toward basic and acidic residues. Disordered regions lie at residues 1 to 23 (MIDD…KYTG), 105 to 179 (NRKR…LPYP), and 421 to 460 (QSNP…STSA). Positions 133-148 (PSSSNMGSCSASNASS) are enriched in low complexity. Residues 421–443 (QSNPMRPHSTSEVLSAHSSTKDA) are compositionally biased toward polar residues.

It belongs to the VHR1 family.

The protein localises to the nucleus. Its function is as follows. Transcription factor that regulates ERG9, but seems to have a more global function in transcription. The protein is Transcription factor VHR2 (VHR2) of Saccharomyces cerevisiae (strain ATCC 204508 / S288c) (Baker's yeast).